Reading from the N-terminus, the 1678-residue chain is Hispidin synthase (1678 aa).

Residues 33 to 453 (GEHRWSYREL…WLGRNTDFIQ (421 aa)) are adenylation (A) domain. Residues 586–661 (DELSNTVKHI…SLSNAVYAKL (76 aa)) enclose the Carrier 1 domain. The residue at position 620 (S620) is an O-(pantetheine 4'-phosphoryl)serine. The 426-residue stretch at 683–1108 (GKEIVVVGQA…GTLGGIVLEA (426 aa)) folds into the Ketosynthase family 3 (KS3) domain. Catalysis depends on for beta-ketoacyl synthase activity residues C852, H988, and H1029. The malonyl-CoA:ACP transacylase (MAT) domain stretch occupies residues 1201–1499 (YKRGALAFAF…VAWSLLLSNG (299 aa)). The segment at 1562-1582 (EETLSSGSSTPTLENTDLDSG) is disordered. Positions 1564 to 1576 (TLSSGSSTPTLEN) are enriched in polar residues. Positions 1597 to 1672 (DDLRDSIVSS…EMVSNLVEQA (76 aa)) constitute a Carrier 2 domain. The residue at position 1632 (S1632) is an O-(pantetheine 4'-phosphoryl)serine.

This sequence in the N-terminal section; belongs to the NRP synthetase family.

The enzyme catalyses (E)-caffeate + 2 malonyl-CoA + ATP + H(+) = hispidin + AMP + 2 CO2 + diphosphate + 2 CoA. It functions in the pathway secondary metabolite biosynthesis. Its function is as follows. PKS-NRPS hybrid synthetase; part of the gene cluster that mediates the fungal bioluminescence cycle. Performs the biosynthesis of hispidin from caffeic acid by two cycles of addition of malonyl units followed by lactonization. The fungal bioluminescence cycle begins with the hispidin synthetase that catalyzes the formation of hispidin which is further hydroxylated by the hispidin-3-hydroxylase, yielding the fungal luciferin 3-hydroxyhispidin. The luciferase then produces an endoperoxide as a high-energy intermediate with decomposition that yields oxyluciferin (also known as caffeoylpyruvate) and light emission. Oxyluciferin can be recycled to caffeic acid by caffeoylpyruvate hydrolase. This is Hispidin synthase from Neonothopanus nambi (Agaricus nambi).